An 897-amino-acid chain; its full sequence is 3'-5' exonuclease DinG (897 aa).

One can recognise an Exonuclease domain in the interval 8-161 (VVDLETTGNQ…DEDAATTAKL (154 aa)). One can recognise a Helicase ATP-binding domain in the interval 241 to 496 (SKAVDQLGLT…KAIDQLEKQR (256 aa)). An ATP-binding site is contributed by 276-283 (ASLGSGKS). Residues 448–451 (DEAH) carry the DEAH box motif. In terms of domain architecture, Helicase C-terminal spans 703–893 (NIDEYVASIV…QFGKLLRQIQ (191 aa)).

Belongs to the helicase family. DinG subfamily. Type 2 sub-subfamily. As to quaternary structure, monomer in solution.

Its activity is regulated as follows. The nuclease activity is inhibited by ATP or ADP. Its function is as follows. 3'-5' exonuclease acting on single-stranded DNA (ssDNA) and RNA (ssRNA) substrates. Displays ssDNA-stimulated ATPase activity, but lacks helicase activity. The protein is 3'-5' exonuclease DinG of Staphylococcus aureus (strain MRSA252).